The primary structure comprises 181 residues: Protein csk22 (181 aa).

A run of 5 helical transmembrane segments spans residues 5 to 22 (LQSV…YKKI), 35 to 57 (WLFT…SAIH), 61 to 78 (YGYL…VFFA), 91 to 113 (IYFR…RFLY), and 140 to 162 (LTIG…IIKL).

The protein resides in the cell membrane. In Bacillus subtilis (strain 168), this protein is Protein csk22 (csk22).